The following is a 151-amino-acid chain: Probable cGMP 3',5'-cyclic phosphodiesterase subunit delta (151 aa).

The protein belongs to the PDE6D/unc-119 family. In terms of assembly, interacts with Pde6.

The protein localises to the nucleus. The protein resides in the cytoplasm. In Drosophila grimshawi (Hawaiian fruit fly), this protein is Probable cGMP 3',5'-cyclic phosphodiesterase subunit delta.